The chain runs to 125 residues: UPF0332 protein AF_0298 (125 aa).

This sequence belongs to the UPF0332 family.

The protein is UPF0332 protein AF_0298 of Archaeoglobus fulgidus (strain ATCC 49558 / DSM 4304 / JCM 9628 / NBRC 100126 / VC-16).